Reading from the N-terminus, the 511-residue chain is Ribose import ATP-binding protein RbsA (511 aa).

2 ABC transporter domains span residues F9–D245 and L261–R506. G41–S48 serves as a coordination point for ATP.

Belongs to the ABC transporter superfamily. Ribose importer (TC 3.A.1.2.1) family. In terms of assembly, the complex is composed of an ATP-binding protein (RbsA), two transmembrane proteins (RbsC) and a solute-binding protein (RbsB).

The protein resides in the cell inner membrane. The enzyme catalyses D-ribose(out) + ATP + H2O = D-ribose(in) + ADP + phosphate + H(+). Its function is as follows. Part of the ABC transporter complex RbsABC involved in ribose import. Responsible for energy coupling to the transport system. The sequence is that of Ribose import ATP-binding protein RbsA from Rhodopirellula baltica (strain DSM 10527 / NCIMB 13988 / SH1).